Consider the following 220-residue polypeptide: Adenylate kinase (220 aa).

10–15 (GSGKST) contributes to the ATP binding site. Positions 30 to 59 (ASGDIIRAEIKARTPLGIEMERYLSRGDLI) are NMP. Residues arginine 36, 57–59 (DLI), 83–86 (GYPR), and glutamine 90 contribute to the AMP site. An LID region spans residues 124–161 (GRRICSKCGAVYHVEFNPPKVPGKCDICGGELIQRPDD). Residue arginine 125 coordinates ATP. Zn(2+)-binding residues include cysteine 128 and cysteine 131. 134–135 (VY) contributes to the ATP binding site. Positions 148 and 151 each coordinate Zn(2+). AMP contacts are provided by arginine 158 and arginine 169. ATP is bound at residue glycine 197.

Belongs to the adenylate kinase family. As to quaternary structure, monomer.

It is found in the cytoplasm. It catalyses the reaction AMP + ATP = 2 ADP. It participates in purine metabolism; AMP biosynthesis via salvage pathway; AMP from ADP: step 1/1. Its function is as follows. Catalyzes the reversible transfer of the terminal phosphate group between ATP and AMP. Plays an important role in cellular energy homeostasis and in adenine nucleotide metabolism. In Pyrococcus abyssi (strain GE5 / Orsay), this protein is Adenylate kinase.